Reading from the N-terminus, the 300-residue chain is Bifunctional protein FolD (300 aa).

NADP(+) is bound by residues 169–171 (GRG), Ser-196, and Ile-237.

This sequence belongs to the tetrahydrofolate dehydrogenase/cyclohydrolase family. In terms of assembly, homodimer.

The catalysed reaction is (6R)-5,10-methylene-5,6,7,8-tetrahydrofolate + NADP(+) = (6R)-5,10-methenyltetrahydrofolate + NADPH. It carries out the reaction (6R)-5,10-methenyltetrahydrofolate + H2O = (6R)-10-formyltetrahydrofolate + H(+). Its pathway is one-carbon metabolism; tetrahydrofolate interconversion. Its function is as follows. Catalyzes the oxidation of 5,10-methylenetetrahydrofolate to 5,10-methenyltetrahydrofolate and then the hydrolysis of 5,10-methenyltetrahydrofolate to 10-formyltetrahydrofolate. The protein is Bifunctional protein FolD of Clavibacter michiganensis subsp. michiganensis (strain NCPPB 382).